We begin with the raw amino-acid sequence, 521 residues long: Lymphocyte activation gene 3 protein (521 aa).

The signal sequence occupies residues 1–23 (MREDLLLGFLLLGLLWEAPVVSS). Residues 24-442 (GPGKELPVVW…ISGDLKGGHL (419 aa)) lie on the Extracellular side of the membrane. The Ig-like V-type domain occupies 37–163 (GAPVHLPCSL…LSCSLRLRVG (127 aa)). The segment at 37–246 (GAPVHLPCSL…LTYRDGFNVS (210 aa)) is interaction with FGL1. A disulfide bond links Cys44 and Cys156. Ig-like C2-type domains lie at 165 to 246 (ASMI…FNVS), 258 to 341 (PVAP…ATVT), and 345 to 412 (ITVT…EGQR). The N-linked (GlcNAc...) asparagine glycan is linked to Asn184. Residues Cys185 and Cys235 are joined by a disulfide bond. N-linked (GlcNAc...) asparagine glycans are attached at residues Asn244, Asn309, Asn337, and Asn381. Cysteines 276 and 327 form a disulfide. Cys363 and Cys405 are joined by a disulfide. Residues 422–442 (ESSSGAHSARRISGDLKGGHL) are connecting peptide. Residues 443–463 (VLVLILGALSLFLLVAGAFGF) form a helical membrane-spanning segment. Over 464–521 (HWWRKQLLLRRFSALEHGIQPFPAQRKIEELERELETEMGQEPEPEPEPQLEPEPRQL) the chain is Cytoplasmic. Residues 490–495 (KIEELE) carry the KIEELE motif motif. The tract at residues 493 to 518 (ELERELETEMGQEPEPEPEPQLEPEP) is 13 X 2 AA tandem repeats of E-X. Residues 493 to 521 (ELERELETEMGQEPEPEPEPQLEPEPRQL) are disordered. Over residues 500–514 (TEMGQEPEPEPEPQL) the composition is skewed to acidic residues.

Belongs to the LAG3 family. In terms of assembly, interacts with MHC class II (MHC-II); selectively recognizes stable complexes of peptide and MHC-II. Interacts with FGL1 (via the Fibrinogen C-terminal domain). In terms of processing, proteolytically cleaved by ADAM10 and ADAM17 within the connecting peptide region, leading to release of Secreted lymphocyte activation gene 3 protein (sLAG-3). ADAM10 mediates constitutive cleavage, but cleavage increases following T-cell activation, whereas shedding by ADAM17 is induced by TCR signaling in a PRKCQ-dependent manner. As to expression, primarily expressed in activated CD4(+) and CD8(+) T-cells. Also expressed in a subset of regulatory T-cells (Tregs), such as natural CD4(+)CD25(+) Tregs. Also expressed on plasmacytoid dendritic cells (pDCs).

It is found in the cell membrane. The protein localises to the secreted. Lymphocyte activation gene 3 protein: Inhibitory receptor on antigen activated T-cells. Delivers inhibitory signals upon binding to ligands, such as FGL1. FGL1 constitutes a major ligand of LAG3 and is responsible for LAG3 T-cell inhibitory function. Following TCR engagement, LAG3 associates with CD3-TCR in the immunological synapse and directly inhibits T-cell activation. May inhibit antigen-specific T-cell activation in synergy with PDCD1/PD-1, possibly by acting as a coreceptor for PDCD1/PD-1. Negatively regulates the proliferation, activation, effector function and homeostasis of both CD8(+) and CD4(+) T-cells. Also mediates immune tolerance: constitutively expressed on a subset of regulatory T-cells (Tregs) and contributes to their suppressive function. Also acts as a negative regulator of plasmacytoid dendritic cell (pDCs) activation. Binds MHC class II (MHC-II); the precise role of MHC-II-binding is however unclear. In terms of biological role, may function as a ligand for MHC class II (MHC-II) on antigen-presenting cells (APC), promoting APC activation/maturation and driving Th1 immune response. The sequence is that of Lymphocyte activation gene 3 protein from Mus musculus (Mouse).